Here is a 320-residue protein sequence, read N- to C-terminus: Biotin synthase (320 aa).

Residues 39–267 (NAIQLATLLS…KARVRLSAGR (229 aa)) enclose the Radical SAM core domain. [4Fe-4S] cluster is bound by residues C54, C58, and C61. The [2Fe-2S] cluster site is built by C98, C130, C190, and R262.

It belongs to the radical SAM superfamily. Biotin synthase family. Homodimer. Requires [4Fe-4S] cluster as cofactor. The cofactor is [2Fe-2S] cluster.

The catalysed reaction is (4R,5S)-dethiobiotin + (sulfur carrier)-SH + 2 reduced [2Fe-2S]-[ferredoxin] + 2 S-adenosyl-L-methionine = (sulfur carrier)-H + biotin + 2 5'-deoxyadenosine + 2 L-methionine + 2 oxidized [2Fe-2S]-[ferredoxin]. Its pathway is cofactor biosynthesis; biotin biosynthesis; biotin from 7,8-diaminononanoate: step 2/2. In terms of biological role, catalyzes the conversion of dethiobiotin (DTB) to biotin by the insertion of a sulfur atom into dethiobiotin via a radical-based mechanism. The sequence is that of Biotin synthase from Synechococcus elongatus (strain ATCC 33912 / PCC 7942 / FACHB-805) (Anacystis nidulans R2).